The following is a 262-amino-acid chain: NAD-dependent protein deacylase (262 aa).

Residues 1–262 (MSNLRRAAEA…AALSPPGVPT (262 aa)) form the Deacetylase sirtuin-type domain. 22–42 (GAGISADSGIPTFRDKLTGLW) serves as a coordination point for NAD(+). 2 residues coordinate substrate: Tyr-67 and Arg-70. NAD(+) is bound at residue 101-104 (QNID). Residue His-119 is the Proton acceptor of the active site. Positions 127, 130, 155, and 158 each coordinate Zn(2+). NAD(+) is bound by residues 195–197 (GTS), 221–223 (NLE), and Ala-239.

Belongs to the sirtuin family. Class III subfamily. Zn(2+) is required as a cofactor.

Its subcellular location is the cytoplasm. It catalyses the reaction N(6)-acetyl-L-lysyl-[protein] + NAD(+) + H2O = 2''-O-acetyl-ADP-D-ribose + nicotinamide + L-lysyl-[protein]. The enzyme catalyses N(6)-succinyl-L-lysyl-[protein] + NAD(+) + H2O = 2''-O-succinyl-ADP-D-ribose + nicotinamide + L-lysyl-[protein]. Its function is as follows. NAD-dependent lysine deacetylase and desuccinylase that specifically removes acetyl and succinyl groups on target proteins. Modulates the activities of several proteins which are inactive in their acylated form. This is NAD-dependent protein deacylase from Pseudomonas putida (strain ATCC 47054 / DSM 6125 / CFBP 8728 / NCIMB 11950 / KT2440).